The following is a 568-amino-acid chain: Proline--tRNA ligase (568 aa).

Belongs to the class-II aminoacyl-tRNA synthetase family. ProS type 1 subfamily. In terms of assembly, homodimer.

The protein resides in the cytoplasm. It catalyses the reaction tRNA(Pro) + L-proline + ATP = L-prolyl-tRNA(Pro) + AMP + diphosphate. Catalyzes the attachment of proline to tRNA(Pro) in a two-step reaction: proline is first activated by ATP to form Pro-AMP and then transferred to the acceptor end of tRNA(Pro). As ProRS can inadvertently accommodate and process non-cognate amino acids such as alanine and cysteine, to avoid such errors it has two additional distinct editing activities against alanine. One activity is designated as 'pretransfer' editing and involves the tRNA(Pro)-independent hydrolysis of activated Ala-AMP. The other activity is designated 'posttransfer' editing and involves deacylation of mischarged Ala-tRNA(Pro). The misacylated Cys-tRNA(Pro) is not edited by ProRS. The polypeptide is Proline--tRNA ligase (Halothermothrix orenii (strain H 168 / OCM 544 / DSM 9562)).